We begin with the raw amino-acid sequence, 459 residues long: MKNISDYRNKKVLVLGLAKSGVNAARLLHKLGALVTVNDKQQFDDNKDAQELLADGMRVITGRHPVELLDEHFELMVKNPGIPYSNPMVKRAEALHMPIITEPELAYQVSEAQWIGITGTNGKTTTTTLIGLMLNQQRPHHAFDAGNIGIPVSQVAQKVGKDDTIVAELSSFQLCGIKTLHPHIAVLTNIYEAHLDWHGNRANYVAAKMRITMNQTPDDYFIMNWDLPEMHELAKQSKAQIVPFSRKNAEGARAQLIDGWLTFDGDRIMKASEMQIPGLHNIENALAAIAAVKLEGVGDDAIREVLRTFSGVKHRIQYLETIDGRRVYNDSKATNVEAATVALNAFDQPIVWLAGGLDRGLPMDALTPLVKKHVKSMVVFGQTAPLMAKIAKDAGVPVQTTENVMTAVPLAYEVSRPGDVILLSPAAASWDQYPNFEVRGDDFIKAVNQLKATVESGDK.

119-125 is a binding site for ATP; the sequence is GTNGKTT.

Belongs to the MurCDEF family.

The protein resides in the cytoplasm. It carries out the reaction UDP-N-acetyl-alpha-D-muramoyl-L-alanine + D-glutamate + ATP = UDP-N-acetyl-alpha-D-muramoyl-L-alanyl-D-glutamate + ADP + phosphate + H(+). It participates in cell wall biogenesis; peptidoglycan biosynthesis. In terms of biological role, cell wall formation. Catalyzes the addition of glutamate to the nucleotide precursor UDP-N-acetylmuramoyl-L-alanine (UMA). This is UDP-N-acetylmuramoylalanine--D-glutamate ligase from Lacticaseibacillus paracasei (strain ATCC 334 / BCRC 17002 / CCUG 31169 / CIP 107868 / KCTC 3260 / NRRL B-441) (Lactobacillus paracasei).